We begin with the raw amino-acid sequence, 238 residues long: Probable 2-phosphosulfolactate phosphatase (238 aa).

It belongs to the ComB family. It depends on Mg(2+) as a cofactor.

The catalysed reaction is (2R)-O-phospho-3-sulfolactate + H2O = (2R)-3-sulfolactate + phosphate. The protein is Probable 2-phosphosulfolactate phosphatase of Clostridium beijerinckii (strain ATCC 51743 / NCIMB 8052) (Clostridium acetobutylicum).